A 360-amino-acid chain; its full sequence is MALTLEELVKRFGGEIAGDAQCKVAGLAPLDQAGPGQLAFLANPKYLSQVETTGAGAVLIAPKDLEKLGAAASGRNFIVTPNPYAYFARVAQMFIDLAAPPRAAGVHPSATIDPAARVADSAVIGPHVTIEAGAVIEDGVQLDANVFVGRGTTIGAGSHLYPNVAVYHGCKIGPRAIVHAGAVIGSDGFGFAPDFVGDGEARTGTWVKIPQVGGVSIGPDVEIGANTTIDRGAMADTVIEECVKIDNQVQIGHNCRIGAYTVIAGCAGIAGSTTIGRHCMIGGAVGIAGHVTLGDYVIVTAKSGVSKSLPKAGIYTSAFPAVDHGEWNRSAALVRNLDKLRDRIKALETALAAQRGDTDA.

The active-site Proton acceptor is the His253.

This sequence belongs to the transferase hexapeptide repeat family. LpxD subfamily. In terms of assembly, homotrimer.

It carries out the reaction a UDP-3-O-[(3R)-3-hydroxyacyl]-alpha-D-glucosamine + a (3R)-hydroxyacyl-[ACP] = a UDP-2-N,3-O-bis[(3R)-3-hydroxyacyl]-alpha-D-glucosamine + holo-[ACP] + H(+). Its pathway is bacterial outer membrane biogenesis; LPS lipid A biosynthesis. Functionally, catalyzes the N-acylation of UDP-3-O-acylglucosamine using 3-hydroxyacyl-ACP as the acyl donor. Is involved in the biosynthesis of lipid A, a phosphorylated glycolipid that anchors the lipopolysaccharide to the outer membrane of the cell. The polypeptide is UDP-3-O-acylglucosamine N-acyltransferase (Burkholderia multivorans (strain ATCC 17616 / 249)).